Reading from the N-terminus, the 236-residue chain is Pyridoxal 5'-phosphate synthase subunit PdxT (236 aa).

Position 61 to 63 (61 to 63) interacts with L-glutamine; it reads GES. The active-site Nucleophile is the cysteine 93. L-glutamine-binding positions include arginine 127 and 163 to 164; that span reads IR. Active-site charge relay system residues include histidine 215 and glutamate 217.

The protein belongs to the glutaminase PdxT/SNO family. In the presence of PdxS, forms a dodecamer of heterodimers. Only shows activity in the heterodimer.

The enzyme catalyses aldehydo-D-ribose 5-phosphate + D-glyceraldehyde 3-phosphate + L-glutamine = pyridoxal 5'-phosphate + L-glutamate + phosphate + 3 H2O + H(+). The catalysed reaction is L-glutamine + H2O = L-glutamate + NH4(+). It participates in cofactor biosynthesis; pyridoxal 5'-phosphate biosynthesis. Functionally, catalyzes the hydrolysis of glutamine to glutamate and ammonia as part of the biosynthesis of pyridoxal 5'-phosphate. The resulting ammonia molecule is channeled to the active site of PdxS. This chain is Pyridoxal 5'-phosphate synthase subunit PdxT, found in Pseudarthrobacter chlorophenolicus (strain ATCC 700700 / DSM 12829 / CIP 107037 / JCM 12360 / KCTC 9906 / NCIMB 13794 / A6) (Arthrobacter chlorophenolicus).